The primary structure comprises 151 residues: uncharacterized protein (151 aa).

This is an uncharacterized protein from Lepidoptera (butterflies and moths).